Here is a 172-residue protein sequence, read N- to C-terminus: Large ribosomal subunit protein uL10 (172 aa).

The protein belongs to the universal ribosomal protein uL10 family. In terms of assembly, part of the ribosomal stalk of the 50S ribosomal subunit. The N-terminus interacts with L11 and the large rRNA to form the base of the stalk. The C-terminus forms an elongated spine to which L12 dimers bind in a sequential fashion forming a multimeric L10(L12)X complex.

Forms part of the ribosomal stalk, playing a central role in the interaction of the ribosome with GTP-bound translation factors. This is Large ribosomal subunit protein uL10 (rplJ) from Brucella abortus biovar 1 (strain 9-941).